We begin with the raw amino-acid sequence, 198 residues long: MQYPEPISKLIDSFMKLPGIGPKTAVRLAFFVLGMKEDVVLDFAKALVNAKRNLTYCSVCGHITDQDPCYICEDTRRDKSVICVVQDPKDVIAMEKMKEYNGQYHVLHGAISPMDGIGPEDIKIPELLKRLQDDQVTEVILATNPNIEGEATAMYISRLLKPSGIKLSRIAHGLPVGGDLEYADEVTLSKALEGRREL.

A C4-type zinc finger spans residues cysteine 57–cysteine 72. One can recognise a Toprim domain in the interval serine 80–proline 175.

Belongs to the RecR family.

In terms of biological role, may play a role in DNA repair. It seems to be involved in an RecBC-independent recombinational process of DNA repair. It may act with RecF and RecO. This is Recombination protein RecR from Bacillus subtilis (strain 168).